The sequence spans 122 residues: NADH-quinone oxidoreductase subunit A (122 aa).

Transmembrane regions (helical) follow at residues 10–30, 67–87, and 91–111; these read LIIFVFLCLGVLLPIGALTAG, FALLFVIFDIETVFLYPWAVV, and LGLFALVEMIIFIVLLAIGLI.

This sequence belongs to the complex I subunit 3 family. As to quaternary structure, NDH-1 is composed of 14 different subunits. Subunits NuoA, H, J, K, L, M, N constitute the membrane sector of the complex.

It localises to the cell membrane. It carries out the reaction a quinone + NADH + 5 H(+)(in) = a quinol + NAD(+) + 4 H(+)(out). Its function is as follows. NDH-1 shuttles electrons from NADH, via FMN and iron-sulfur (Fe-S) centers, to quinones in the respiratory chain. The immediate electron acceptor for the enzyme in this species is believed to be a menaquinone. Couples the redox reaction to proton translocation (for every two electrons transferred, four hydrogen ions are translocated across the cytoplasmic membrane), and thus conserves the redox energy in a proton gradient. In Geobacillus kaustophilus (strain HTA426), this protein is NADH-quinone oxidoreductase subunit A.